Here is a 307-residue protein sequence, read N- to C-terminus: Murein tetrapeptide carboxypeptidase (307 aa).

The Nucleophile role is filled by Ser-115. Catalysis depends on charge relay system residues Glu-217 and His-285.

It belongs to the peptidase S66 family. In terms of assembly, homodimer.

It is found in the cytoplasm. The enzyme catalyses N-acetyl-D-glucosaminyl-N-acetylmuramoyl-L-alanyl-meso-2,6-diaminoheptanedioyl-D-alanine + H2O = N-acetyl-D-glucosaminyl-N-acetylmuramoyl-L-alanyl-meso-2,6-diaminoheptanedioate + D-alanine. It functions in the pathway cell wall biogenesis; peptidoglycan recycling. In terms of biological role, releases the terminal D-alanine residue from the cytoplasmic disaccharide-tetrapeptide GlcNAc-MurNAc-L-Ala-gamma-D-Glu-meso-Dap-D-Ala, which is a murein turnover product. Probably also act on free tetrapetide. May be involved in murein recycling. The sequence is that of Murein tetrapeptide carboxypeptidase from Pseudomonas aeruginosa (strain ATCC 15692 / DSM 22644 / CIP 104116 / JCM 14847 / LMG 12228 / 1C / PRS 101 / PAO1).